The primary structure comprises 260 residues: Vaa serine proteinase homolog 1 (260 aa).

The first 18 residues, 1 to 18, serve as a signal peptide directing secretion; sequence MVLIRVLANLLVLQLSYA. Residues 19-24 constitute a propeptide that is removed on maturation; sequence QKSSEL. Residues 25-251 form the Peptidase S1 domain; sequence VIGGDECNIN…YTDWIQSIIA (227 aa). 6 cysteine pairs are disulfide-bonded: Cys-31–Cys-165, Cys-52–Cys-68, Cys-100–Cys-258, Cys-144–Cys-212, Cys-176–Cys-191, and Cys-202–Cys-227. Asn-123 carries an N-linked (GlcNAc...) asparagine glycan. The segment at 172-186 is key residues for binding to FVIIIa; it reads DYSVCQKVYRKLPEK. Residue Asn-253 is glycosylated (N-linked (GlcNAc...) asparagine).

This sequence belongs to the peptidase S1 family. Snake venom subfamily. In terms of processing, N-glycosylated. The toxin exists in multiple glycoforms. In terms of tissue distribution, expressed by the venom gland.

It is found in the secreted. Its function is as follows. This is the first member of the serine protease family that has strong anticoagulant activity and lacks enzymatic activity. It inhibits activities of three blood coagulation complexes: (1) prothrombinase complex (composed of blood coagulation factors Va and Xa (F5 and F10)) (IC(50)=164.1 nM), (2) intrinsic tenase complex (composed of factors VIIIa and IXa (F8 and F9)), and (3) extrinsic tenase complex (composed of tissue factor and factor VIIa (F7)). The toxin also has been observed to bind prothrombin, factor FVa, non-activated and activated forms of factors FVII (F7) (FVII and FVIIa), factor FVIIIa (F8), factors FIX and FIXa (F9) and factors FX and FXa (F10). The toxin inhibits the activity of the intrinsic tenase complex mainly by competing with FIXa (F9) for binding to FVIIIa (F8). This Vipera ammodytes ammodytes (Western sand viper) protein is Vaa serine proteinase homolog 1.